Reading from the N-terminus, the 302-residue chain is MKNFGLLVVCLSLATLVIPSDGVHIDGDAAPFFVVSQIQHTAGNPAVVGSSYTGRTAVAPPLNMRTNVAVPSTLGINSVNIGTNLPTFYQPTPQPVRSFKNTIDPSLLYSLMAGGLRGDGFLNQLNTIEFSSPAEVIDAVENAVENRADAIKDVIETVSGAVQNGDDEVEGIYDVFAEDDSENPVENLDDSDGVYDVFADAMEKKAEALENAAEAAAEYISDQSEEVDDLSEEVLDDDSDENDSTSSESEVEDSDVDLEVDVGIDLGGDLDLGGGVDLGGGMGMGGALNMNGGLDMGGRYGR.

Residues 1 to 22 (MKNFGLLVVCLSLATLVIPSDG) form the signal peptide. A coiled-coil region spans residues 198–234 (FADAMEKKAEALENAAEAAAEYISDQSEEVDDLSEEV). The disordered stretch occupies residues 221–257 (SDQSEEVDDLSEEVLDDDSDENDSTSSESEVEDSDVD). The span at 223–257 (QSEEVDDLSEEVLDDDSDENDSTSSESEVEDSDVD) shows a compositional bias: acidic residues. The N-linked (GlcNAc...) asparagine glycan is linked to N242.

As to expression, component of the acid-insoluble organic matrix of calcified layers of the shell (at protein level).

It is found in the secreted. This is Coiled-coil domain-containing protein 2 from Lottia gigantea (Giant owl limpet).